The following is a 300-amino-acid chain: uncharacterized protein (300 aa).

Disordered stretches follow at residues 167–186 and 224–244; these read DVFL…HHEH and ADGS…DASH. Polar residues predominate over residues 224–236; that stretch reads ADGSSLETSSMSS.

This is an uncharacterized protein from Rattus norvegicus (Rat).